The following is a 92-amino-acid chain: Protease inhibitors (92 aa).

The signal sequence occupies residues 1-19 (MKFALALCAAVLLVVLVQA). Pacifastin domains are found at residues 20-54 (EEKC…CQPA) and 57-92 (EISC…CPNQ). 6 disulfides stabilise this stretch: Cys23–Cys38, Cys33–Cys51, Cys36–Cys46, Cys60–Cys75, Cys70–Cys89, and Cys73–Cys84. The O-linked (Fuc) threonine glycan is linked to Thr65.

The protein belongs to the protease inhibitor I19 family. As to expression, brain and fat body.

It localises to the secreted. Functionally, both LCMI I and II are inhibitors of chymotrypsin and elastase (in vitro). They both inhibit the prophenol oxidase activation cascade. This chain is Protease inhibitors, found in Locusta migratoria (Migratory locust).